A 337-amino-acid chain; its full sequence is Serpentine receptor class delta-50 (337 aa).

7 helical membrane passes run 10–30 (VLILTIFYNAYFLLAISSQLL), 48–68 (IYLFNILGLQFISTFSAFVLQ), 107–127 (VLFHILQTSLIACATALIIAF), 147–167 (QLVISYCVPLVFLICEVLSPN), 202–222 (SSQTLMLMIGLYGTPFIALVF), 250–270 (GLTLQTLLPLICYCPGFTYYI), and 280–300 (LFVEFAVSPYGFVYTIFDPLL).

This sequence belongs to the nematode receptor-like protein srd family.

Its subcellular location is the membrane. This is Serpentine receptor class delta-50 from Caenorhabditis elegans.